A 1377-amino-acid chain; its full sequence is Carboxypeptidase D (1377 aa).

An N-terminal signal peptide occupies residues 1-37 (MASGRDERPPWRLGRLRLLPPPPLLLLLLLLRSSAQA). Over 38–1296 (AHIKKAEATT…DNRIFGLPRE (1259 aa)) the chain is Extracellular. One can recognise a Peptidase M14 1 domain in the interval 62-379 (HYYHEAALGE…ESLITLIEKV (318 aa)). His138 and Glu141 together coordinate Zn(2+). The Cell attachment site signature appears at 161-163 (RGD). 2 N-linked (GlcNAc...) asparagine glycosylation sites follow: Asn171 and Asn216. The segment at 188–231 (RAREGDCGLGDSGPPGTSGRDNSRGRDLNRSFPDQFSTGEPPSL) is disordered. Zn(2+) is bound at residue His256. Tyr264 carries the phosphotyrosine modification. Ser269 carries the phosphoserine modification. Glu349 (proton donor/acceptor) is an active-site residue. N-linked (GlcNAc...) asparagine glycans are attached at residues Asn398, Asn409, Asn428, and Asn521. Residues 501–791 (HHHHFPDMEI…RSLIQFMKQV (291 aa)) enclose the Peptidase M14 2 domain. His563 and Glu566 together coordinate Zn(2+). Asn625 carries N-linked (GlcNAc...) asparagine glycosylation. Zn(2+) is bound at residue His670. The active-site Proton donor/acceptor is Glu761. N-linked (GlcNAc...) asparagine glycans are attached at residues Asn810, Asn854, Asn866, Asn878, Asn952, and Asn975. Residues 874–898 (ADANNESKKGRGHSTSTDDTSDPTS) form a disordered region. One can recognise a Peptidase M14 3 domain in the interval 929–1208 (RYHSYKDLSE…KSLLSMLVEV (280 aa)). Residues 1038–1047 (RERAQEKDCT) show a composition bias toward basic and acidic residues. The segment at 1038–1064 (RERAQEKDCTSKTGHTNAHGKDLDTDF) is disordered. N-linked (GlcNAc...) asparagine glycosylation is found at Asn1067 and Asn1139. The chain crosses the membrane as a helical span at residues 1297-1317 (LVVTVSGATMSALILTACIIW). S-palmitoyl cysteine attachment occurs at residues Cys1314, Cys1318, and Cys1320. Over 1318-1377 (CICSIKSNRHKDGFHRLRQHHDEYEDEIRMMSTGSKKSLLSHEFQDETDTEEETLYSSKH) the chain is Cytoplasmic. Residues Ser1355 and Ser1358 each carry the phosphoserine modification. A disordered region spans residues 1356 to 1377 (LLSHEFQDETDTEEETLYSSKH). Thr1365 and Thr1367 each carry phosphothreonine.

It belongs to the peptidase M14 family. Requires Zn(2+) as cofactor.

It localises to the cell membrane. It catalyses the reaction Releases C-terminal Arg and Lys from polypeptides.. The sequence is that of Carboxypeptidase D (Cpd) from Mus musculus (Mouse).